A 122-amino-acid chain; its full sequence is Ribosome-binding factor A (122 aa).

It belongs to the RbfA family. As to quaternary structure, monomer. Binds 30S ribosomal subunits, but not 50S ribosomal subunits or 70S ribosomes.

It is found in the cytoplasm. Its function is as follows. One of several proteins that assist in the late maturation steps of the functional core of the 30S ribosomal subunit. Associates with free 30S ribosomal subunits (but not with 30S subunits that are part of 70S ribosomes or polysomes). Required for efficient processing of 16S rRNA. May interact with the 5'-terminal helix region of 16S rRNA. This is Ribosome-binding factor A from Streptococcus agalactiae serotype III (strain NEM316).